The following is a 445-amino-acid chain: Phosphoglucosamine mutase (445 aa).

Ser102 serves as the catalytic Phosphoserine intermediate. Positions 102, 241, 243, and 245 each coordinate Mg(2+). Phosphoserine is present on Ser102.

This sequence belongs to the phosphohexose mutase family. The cofactor is Mg(2+). Activated by phosphorylation.

It catalyses the reaction alpha-D-glucosamine 1-phosphate = D-glucosamine 6-phosphate. Functionally, catalyzes the conversion of glucosamine-6-phosphate to glucosamine-1-phosphate. This Shewanella piezotolerans (strain WP3 / JCM 13877) protein is Phosphoglucosamine mutase.